The sequence spans 236 residues: tRNA1(Val) (adenine(37)-N6)-methyltransferase (236 aa).

Belongs to the methyltransferase superfamily. tRNA (adenine-N(6)-)-methyltransferase family.

It is found in the cytoplasm. The enzyme catalyses adenosine(37) in tRNA1(Val) + S-adenosyl-L-methionine = N(6)-methyladenosine(37) in tRNA1(Val) + S-adenosyl-L-homocysteine + H(+). Specifically methylates the adenine in position 37 of tRNA(1)(Val) (anticodon cmo5UAC). The sequence is that of tRNA1(Val) (adenine(37)-N6)-methyltransferase from Histophilus somni (strain 129Pt) (Haemophilus somnus).